We begin with the raw amino-acid sequence, 109 residues long: Class I hydrophobin SC1 (109 aa).

Residues Met1–Gly22 form the signal peptide. 4 cysteine pairs are disulfide-bonded: Cys27-Cys88, Cys34-Cys82, Cys35-Cys69, and Cys89-Cys102.

It belongs to the fungal hydrophobin family. As to quaternary structure, self-assembles to form functional amyloid fibrils called rodlets. Self-assembly into fibrillar rodlets occurs spontaneously at hydrophobic:hydrophilic interfaces and the rodlets further associate laterally to form amphipathic monolayers.

It localises to the secreted. Its subcellular location is the cell wall. In terms of biological role, aerial growth, conidiation, and dispersal of filamentous fungi in the environment rely upon a capability of their secreting small amphipathic proteins called hydrophobins (HPBs) with low sequence identity. Class I can self-assemble into an outermost layer of rodlet bundles on aerial cell surfaces, conferring cellular hydrophobicity that supports fungal growth, development and dispersal; whereas Class II form highly ordered films at water-air interfaces through intermolecular interactions but contribute nothing to the rodlet structure. SC1 is a dikaryon-specific class I hydrophobin that contributes to the formation of aerial hyphae and fruiting bodies. The sequence is that of Class I hydrophobin SC1 from Schizophyllum commune (Split gill fungus).